We begin with the raw amino-acid sequence, 277 residues long: Caspase-3 (277 aa).

Position 1 is an N-acetylmethionine (methionine 1). 2 consecutive propeptides follow at residues 1-9 (MENNETSVD) and 10-28 (SKSI…KSMD). Lysine 11 carries the N6-acetyllysine modification. A Phosphoserine modification is found at serine 26. Catalysis depends on residues histidine 121 and cysteine 163. At cysteine 163 the chain carries S-nitrosocysteine; in inhibited form.

This sequence belongs to the peptidase C14A family. Heterotetramer that consists of two anti-parallel arranged heterodimers, each one formed by a 17 kDa (p17) and a 12 kDa (p12) subunit. Interacts with BIRC6/bruce. Cleavage by granzyme B, caspase-6, caspase-8 and caspase-10 generates the two active subunits. Additional processing of the propeptides is likely due to the autocatalytic activity of the activated protease. Active heterodimers between the small subunit of caspase-7 protease and the large subunit of caspase-3 also occur and vice versa. In terms of processing, S-nitrosylated on its catalytic site cysteine in unstimulated cell lines and denitrosylated upon activation of the Fas apoptotic pathway, associated with an increase in intracellular caspase activity. Fas therefore activates caspase-3 not only by inducing the cleavage of the caspase zymogen to its active subunits, but also by stimulating the denitrosylation of its active site thiol. Post-translationally, ubiquitinated by BIRC6; this activity is inhibited by DIABLO/SMAC.

The protein resides in the cytoplasm. The enzyme catalyses Strict requirement for an Asp residue at positions P1 and P4. It has a preferred cleavage sequence of Asp-Xaa-Xaa-Asp-|- with a hydrophobic amino-acid residue at P2 and a hydrophilic amino-acid residue at P3, although Val or Ala are also accepted at this position.. Its activity is regulated as follows. Inhibited by BIRC6; following inhibition of BIRC6-caspase binding by DIABLO/SMAC, BIRC6 is subjected to caspase cleavage, leading to an increase in active caspases. Involved in the activation cascade of caspases responsible for apoptosis execution. At the onset of apoptosis, it proteolytically cleaves poly(ADP-ribose) polymerase PARP1 at a '216-Asp-|-Gly-217' bond. Cleaves and activates sterol regulatory element binding proteins (SREBPs) between the basic helix-loop-helix leucine zipper domain and the membrane attachment domain. Cleaves and activates caspase-6, -7 and -9 (CASP6, CASP7 and CASP9, respectively). Cleaves and inactivates interleukin-18 (IL18). Triggers cell adhesion in sympathetic neurons through RET cleavage. Cleaves IL-1 beta between an Asp and an Ala, releasing the mature cytokine which is involved in a variety of inflammatory processes. Cleaves and inhibits serine/threonine-protein kinase AKT1 in response to oxidative stress. Acts as an inhibitor of type I interferon production during virus-induced apoptosis by mediating cleavage of antiviral proteins CGAS, IRF3 and MAVS, thereby preventing cytokine overproduction. Also involved in pyroptosis by mediating cleavage and activation of gasdermin-E (GSDME). Cleaves XRCC4 and phospholipid scramblase proteins XKR4, XKR8 and XKR9, leading to promote phosphatidylserine exposure on apoptotic cell surface. Cleaves BIRC6 following inhibition of BIRC6-caspase binding by DIABLO/SMAC. This chain is Caspase-3 (CASP3), found in Mesocricetus auratus (Golden hamster).